The chain runs to 209 residues: Elongation factor Ts, chloroplastic (209 aa).

Belongs to the EF-Ts family.

Its subcellular location is the plastid. It is found in the chloroplast. Its function is as follows. Associates with the EF-Tu.GDP complex and induces the exchange of GDP to GTP. It remains bound to the aminoacyl-tRNA.EF-Tu.GTP complex up to the GTP hydrolysis stage on the ribosome. The sequence is that of Elongation factor Ts, chloroplastic (tsf) from Cyanidioschyzon merolae (strain NIES-3377 / 10D) (Unicellular red alga).